The sequence spans 352 residues: NAD-dependent protein deacetylase sirtuin-2 (352 aa).

Ser-16 carries the post-translational modification Phosphoserine. Residues 20-301 (RLLDELTLEG…LALAELLGWK (282 aa)) form the Deacetylase sirtuin-type domain. NAD(+) contacts are provided by residues 48 to 52 (AGIST) and 58 to 60 (DFR). Ser-63 is subject to Phosphoserine. Position 130-133 (130-133 (QNID)) interacts with NAD(+). His-150 (proton acceptor) is an active-site residue. Positions 158 and 163 each coordinate Zn(2+). Ser-170 bears the Phosphoserine mark. Residues Cys-184 and Cys-187 each contribute to the Zn(2+) site. NAD(+) is bound by residues 225–226 (TS), 249–251 (NKE), and Cys-287. The tract at residues 314 to 352 (SIDAQSGAGVPNPSTSASPKKSPPPAKDEARTTEREKPQ) is disordered. Residues 324–333 (PNPSTSASPK) show a composition bias toward low complexity. Phosphoserine is present on residues Ser-331 and Ser-335. Residues 339-352 (AKDEARTTEREKPQ) show a composition bias toward basic and acidic residues.

The protein belongs to the sirtuin family. Class I subfamily. As to quaternary structure, interacts with CDC20, FOXO3 and FZR1. Associates with microtubules in primary cortical mature neurons. Homotrimer. Interacts (via both phosphorylated, unphosphorylated, active or inactive forms) with HDAC6; the interaction is necessary for the complex to interact with alpha-tubulin, suggesting that these proteins belong to a large complex that deacetylates the cytoskeleton. Interacts with FOXO1; the interaction is disrupted upon serum-starvation or oxidative stress, leading to increased level of acetylated FOXO1 and induction of autophagy. Interacts with RELA; the interaction occurs in the cytoplasm and is increased in a TNF-alpha-dependent manner. Interacts with HOXA10; the interaction is direct. Interacts with YWHAB and YWHAG; the interactions occur in a AKT-dependent manner and increase SIRT2-dependent TP53 deacetylation. Interacts with MAPK1/ERK2 and MAPK3/ERK1; the interactions increase SIRT2 stability and deacetylation activity. Interacts (phosphorylated form) with KMT5A isoform 2; the interaction is direct, stimulates KMT5A-mediated methyltransferase activity on histone at 'Lys-20' (H4K20me1) and is increased in a H(2)O(2)-induced oxidative stress-dependent manner. Interacts with G6PD; the interaction is enhanced by H(2)O(2) treatment. Interacts with a G1/S-specific cyclin E-CDK2 complex. Interacts with AURKA, CDK5R1 (p35 form) and CDK5 and HIF1A. Interacts with the tRNA ligase SARS1; recruited to the VEGFA promoter via interaction with SARS1. Interacts with BEX4; negatively regulates alpha-tubulin deacetylation by SIRT2. Interacts with MORN3; the interaction enhances the ubiquitination of p53/TP53. Requires Zn(2+) as cofactor. Phosphorylated at phosphoserine and phosphothreonine. Phosphorylated at Ser-331 by a mitotic kinase CDK1/cyclin B at the G2/M transition; phosphorylation regulates the delay in cell-cycle progression. Phosphorylated at Ser-331 by a mitotic kinase G1/S-specific cyclin E/Cdk2 complex; phosphorylation inactivates SIRT2-mediated alpha-tubulin deacetylation and thereby negatively regulates cell adhesion, cell migration and neurite outgrowth during neuronal differentiation. Phosphorylated by cyclin A/Cdk2 and p35-Cdk5 complexes and to a lesser extent by the cyclin D3/Cdk4 and cyclin B/Cdk1, in vitro. Dephosphorylated at Ser-331 by CDC14A and CDC14B around early anaphase. Post-translationally, acetylated by EP300; acetylation leads both to the decreased of SIRT2-mediated alpha-tubulin deacetylase activity and SIRT2-mediated down-regulation of TP53 transcriptional activity. In terms of processing, ubiquitinated.

The protein localises to the nucleus. Its subcellular location is the cytoplasm. It is found in the perinuclear region. It localises to the cytoskeleton. The protein resides in the microtubule organizing center. The protein localises to the centrosome. Its subcellular location is the centriole. It is found in the spindle. It localises to the midbody. The protein resides in the chromosome. The protein localises to the perikaryon. Its subcellular location is the cell projection. It is found in the growth cone. It localises to the myelin membrane. It carries out the reaction N(6)-acetyl-L-lysyl-[protein] + NAD(+) + H2O = 2''-O-acetyl-ADP-D-ribose + nicotinamide + L-lysyl-[protein]. The catalysed reaction is N(6)-tetradecanoyl-L-lysyl-[protein] + NAD(+) + H2O = 2''-O-tetradecanoyl-ADP-D-ribose + nicotinamide + L-lysyl-[protein]. It catalyses the reaction N(6)-hexadecanoyl-L-lysyl-[protein] + NAD(+) + H2O = 2''-O-hexadecanoyl-ADP-D-ribose + nicotinamide + L-lysyl-[protein]. With respect to regulation, inhibited by Sirtinol, A3 and M15 small molecules. Inhibited by nicotinamide. Inhibited by a macrocyclic peptide inhibitor S2iL5. Inhibited by EP300-induced acetylation. In terms of biological role, NAD-dependent protein deacetylase, which deacetylates internal lysines on histone and alpha-tubulin as well as many other proteins such as key transcription factors. Participates in the modulation of multiple and diverse biological processes such as cell cycle control, genomic integrity, microtubule dynamics, cell differentiation, metabolic networks, and autophagy. Plays a major role in the control of cell cycle progression and genomic stability. Functions in the antephase checkpoint preventing precocious mitotic entry in response to microtubule stress agents, and hence allowing proper inheritance of chromosomes. Positively regulates the anaphase promoting complex/cyclosome (APC/C) ubiquitin ligase complex activity by deacetylating CDC20 and FZR1, then allowing progression through mitosis. Associates both with chromatin at transcriptional start sites (TSSs) and enhancers of active genes. Plays a role in cell cycle and chromatin compaction through epigenetic modulation of the regulation of histone H4 'Lys-20' methylation (H4K20me1) during early mitosis. Specifically deacetylates histone H4 at 'Lys-16' (H4K16ac) between the G2/M transition and metaphase enabling H4K20me1 deposition by KMT5A leading to ulterior levels of H4K20me2 and H4K20me3 deposition throughout cell cycle, and mitotic S-phase progression. Deacetylates KMT5A modulating KMT5A chromatin localization during the mitotic stress response. Also deacetylates histone H3 at 'Lys-57' (H3K56ac) during the mitotic G2/M transition. During oocyte meiosis progression, may deacetylate histone H4 at 'Lys-16' (H4K16ac) and alpha-tubulin, regulating spindle assembly and chromosome alignment by influencing microtubule dynamics and kinetochore function. Deacetylates histone H4 at 'Lys-16' (H4K16ac) at the VEGFA promoter and thereby contributes to regulate expression of VEGFA, a key regulator of angiogenesis. Deacetylates alpha-tubulin at 'Lys-40' and hence controls neuronal motility, oligodendroglial cell arbor projection processes and proliferation of non-neuronal cells. Phosphorylation at Ser-368 by a G1/S-specific cyclin E-CDK2 complex inactivates SIRT2-mediated alpha-tubulin deacetylation, negatively regulating cell adhesion, cell migration and neurite outgrowth during neuronal differentiation. Deacetylates PARD3 and participates in the regulation of Schwann cell peripheral myelination formation during early postnatal development and during postinjury remyelination. Involved in several cellular metabolic pathways. Plays a role in the regulation of blood glucose homeostasis by deacetylating and stabilizing phosphoenolpyruvate carboxykinase PCK1 activity in response to low nutrient availability. Acts as a key regulator in the pentose phosphate pathway (PPP) by deacetylating and activating the glucose-6-phosphate G6PD enzyme, and therefore, stimulates the production of cytosolic NADPH to counteract oxidative damage. Maintains energy homeostasis in response to nutrient deprivation as well as energy expenditure by inhibiting adipogenesis and promoting lipolysis. Attenuates adipocyte differentiation by deacetylating and promoting FOXO1 interaction to PPARG and subsequent repression of PPARG-dependent transcriptional activity. Plays a role in the regulation of lysosome-mediated degradation of protein aggregates by autophagy in neuronal cells. Deacetylates FOXO1 in response to oxidative stress or serum deprivation, thereby negatively regulating FOXO1-mediated autophagy. Deacetylates a broad range of transcription factors and co-regulators regulating target gene expression. Deacetylates transcriptional factor FOXO3 stimulating the ubiquitin ligase SCF(SKP2)-mediated FOXO3 ubiquitination and degradation. Deacetylates HIF1A and therefore promotes HIF1A degradation and inhibition of HIF1A transcriptional activity in tumor cells in response to hypoxia. Deacetylates RELA in the cytoplasm inhibiting NF-kappaB-dependent transcription activation upon TNF-alpha stimulation. Inhibits transcriptional activation by deacetylating p53/TP53 and EP300. Also deacetylates EIF5A. Functions as a negative regulator on oxidative stress-tolerance in response to anoxia-reoxygenation conditions. Plays a role as tumor suppressor. In addition to protein deacetylase activity, also has activity toward long-chain fatty acyl groups and mediates protein-lysine demyristoylation and depalmitoylation of target proteins, such as ARF6 and KRAS, thereby regulating their association with membranes. The protein is NAD-dependent protein deacetylase sirtuin-2 (SIRT2) of Pongo abelii (Sumatran orangutan).